A 280-amino-acid polypeptide reads, in one-letter code: uncharacterized protein (280 aa).

6 helical membrane passes run I3–I23, F52–V72, I81–I101, N123–L143, F196–G216, and I233–I253.

The protein resides in the cell membrane. This is an uncharacterized protein from Rickettsia prowazekii (strain Madrid E).